A 116-amino-acid chain; its full sequence is Large ribosomal subunit protein uL18 (116 aa).

This sequence belongs to the universal ribosomal protein uL18 family. As to quaternary structure, part of the 50S ribosomal subunit; part of the 5S rRNA/L5/L18/L25 subcomplex. Contacts the 5S and 23S rRNAs.

This is one of the proteins that bind and probably mediate the attachment of the 5S RNA into the large ribosomal subunit, where it forms part of the central protuberance. The chain is Large ribosomal subunit protein uL18 from Teredinibacter turnerae (strain ATCC 39867 / T7901).